Here is a 73-residue protein sequence, read N- to C-terminus: uncharacterized protein (73 aa).

Residues 54 to 72 (VSFIVAPTVMQVQCLFFFI) traverse the membrane as a helical segment.

The protein resides in the membrane. This is an uncharacterized protein from Saccharomyces cerevisiae (strain ATCC 204508 / S288c) (Baker's yeast).